The following is a 547-amino-acid chain: Hydroxylamine reductase (547 aa).

Cys5, Cys8, Cys17, and Cys23 together coordinate [4Fe-4S] cluster. His242, Glu266, Cys310, Cys401, Cys429, Cys454, Glu489, and Lys491 together coordinate hybrid [4Fe-2O-2S] cluster. Cys401 is modified (cysteine persulfide).

The protein belongs to the HCP family. [4Fe-4S] cluster is required as a cofactor. The cofactor is hybrid [4Fe-2O-2S] cluster.

Its subcellular location is the cytoplasm. The catalysed reaction is A + NH4(+) + H2O = hydroxylamine + AH2 + H(+). Its function is as follows. Catalyzes the reduction of hydroxylamine to form NH(3) and H(2)O. The chain is Hydroxylamine reductase from Thermoanaerobacter pseudethanolicus (strain ATCC 33223 / 39E) (Clostridium thermohydrosulfuricum).